Consider the following 64-residue polypeptide: Conotoxin Vc1.3 (64 aa).

Residues 1 to 21 (MGMRMMFTVFLLVVLATTVVS) form the signal peptide. The propeptide occupies 22–43 (FTSDRASDGRKAAASDLITLTI). Cystine bridges form between Cys46/Cys52 and Cys47/Cys60. Residue Cys60 is modified to Cysteine amide.

This sequence belongs to the conotoxin A superfamily. Expressed by the venom duct.

It localises to the secreted. In terms of biological role, may act as a toxin. In Conus victoriae (Queen Victoria cone), this protein is Conotoxin Vc1.3.